Reading from the N-terminus, the 123-residue chain is Thioredoxin H-type 1 (123 aa).

N-acetylalanine is present on A2. Residues 2 to 119 (AATAEVIPAG…IEAKLLKHSQ (118 aa)) form the Thioredoxin domain. Cysteines 45 and 48 form a disulfide.

The protein belongs to the thioredoxin family. Plant H-type subfamily.

It is found in the cytoplasm. Participates in various redox reactions through the reversible oxidation of the active center dithiol to a disulfide. The H form is known to activate a number of cytosolic enzymes. The polypeptide is Thioredoxin H-type 1 (THL-1) (Brassica napus (Rape)).